Consider the following 202-residue polypeptide: Probable host range protein 2-2 (202 aa).

It belongs to the poxviridae C7 protein family.

Plays a role for multiplication of the virus in different cell types. The polypeptide is Probable host range protein 2-2 (Oryctolagus cuniculus (Rabbit)).